The primary structure comprises 125 residues: Protein ApaG (125 aa).

In terms of domain architecture, ApaG spans 1–125 (MIEQPRICVQ…FRLAIPALIH (125 aa)).

This Yersinia pseudotuberculosis serotype IB (strain PB1/+) protein is Protein ApaG.